The sequence spans 128 residues: uncharacterized protein (128 aa).

Residues 1–26 (MNSATSETTTNTGAAETTTSTGAAET) are disordered. The chain crosses the membrane as a helical span at residues 105–127 (IANGLLTNNGISVFISTVLLAIV).

Belongs to the flocculin family.

The protein resides in the membrane. This is an uncharacterized protein from Saccharomyces cerevisiae (strain ATCC 204508 / S288c) (Baker's yeast).